The sequence spans 365 residues: Neuronal migration protein doublecortin (365 aa).

Serine 28 carries the post-translational modification Phosphoserine; by CDK5. Serine 47 is modified (phosphoserine; by MARK1 and PKA). Doublecortin domains follow at residues 53-139 (KKVR…VEYT) and 180-263 (KLVT…AQDD). Tyrosine 70 bears the Phosphotyrosine; by ABL mark. Serine 74 bears the Phosphoserine; by PKC mark. Phosphoserine; by CK2 is present on serine 90. At serine 110 the chain carries Phosphoserine; by PKC. A Phosphoserine; by CK2, MARK1 and PKA modification is found at serine 115. A Phosphoserine; by CK2 modification is found at serine 265. Residues 275 to 365 (KGNPSATAGP…DDSDSLGDSM (91 aa)) form a disordered region. Serine 287 carries the post-translational modification Phosphoserine; by CDK5. Residue threonine 289 is modified to Phosphothreonine; by CDK5. Position 294 is a phosphoserine; by PKC (serine 294). Serine 297 is subject to Phosphoserine; by CDK5. Serine 306 carries the phosphoserine; by CK2 modification. Serine 306 bears the Phosphoserine; by DYRK2 mark. The span at 307-341 (PADSGNDQDANGTSSSQLSTPKSKQSPISTPTSPG) shows a compositional bias: polar residues. Threonine 326 carries the phosphothreonine; by CDK5 modification. Phosphothreonine; by PKC and MAPK is present on threonine 326. The residue at position 332 (serine 332) is a Phosphoserine; by CDK5. Serine 332 is modified (phosphoserine; by MAPK). Threonine 336 carries the phosphothreonine; by MAPK modification. Serine 339 is modified (phosphoserine; by CDK5). At serine 339 the chain carries Phosphoserine; by MAPK. Position 342 is a phosphoserine; by PKC (serine 342). Phosphoserine; by CK2 is present on residues serine 354 and serine 360. A compositionally biased stretch (acidic residues) spans 356 to 365 (DDSDSLGDSM).

In terms of assembly, interacts with tubulin. Interacts with USP9X. In terms of processing, phosphorylation by MARK1, MARK2 and PKA regulates its ability to bind microtubules. Phosphorylation at Ser-265 and Ser-297 seems to occur only in neonatal brain, the levels falling precipitously by postnatal day 21. Ubiquitinated by MDM2, leading to its degradation by the proteasome. Ubiquitinated by MDM2 and subsequent degradation leads to reduce the dendritic spine density of olfactory bulb granule cells.

Its subcellular location is the cytoplasm. The protein localises to the cell projection. The protein resides in the neuron projection. Functionally, microtubule-associated protein required for initial steps of neuronal dispersion and cortex lamination during cerebral cortex development. May act by competing with the putative neuronal protein kinase DCLK1 in binding to a target protein. May in that way participate in a signaling pathway that is crucial for neuronal interaction before and during migration, possibly as part of a calcium ion-dependent signal transduction pathway. May participate along with PAFAH1B1/LIS-1 in a distinct overlapping signaling pathway that promotes neuronal migration. The sequence is that of Neuronal migration protein doublecortin (Dcx) from Rattus norvegicus (Rat).